The chain runs to 84 residues: Cell division protein CrgA (84 aa).

The next 2 membrane-spanning stretches (helical) occupy residues 31–51 (VAPV…VFYV) and 60–80 (ALDN…FGVS).

Belongs to the CrgA family.

Its subcellular location is the cell membrane. Its function is as follows. Involved in cell division. Coordinates growth and cell division. Required for the formation of the sporulation septa. The protein is Cell division protein CrgA of Streptomyces avermitilis (strain ATCC 31267 / DSM 46492 / JCM 5070 / NBRC 14893 / NCIMB 12804 / NRRL 8165 / MA-4680).